Consider the following 310-residue polypeptide: Lipoyl synthase (310 aa).

Residues cysteine 41, cysteine 46, cysteine 52, cysteine 68, cysteine 72, cysteine 75, and serine 281 each contribute to the [4Fe-4S] cluster site. The Radical SAM core domain maps to 54 to 270; that stretch reads GERRTATFMI…RKVAMEKGFK (217 aa). The interval 285–310 is disordered; that stretch reads DEQVNEAAKERQRIGDEKLEAAKNEA.

Belongs to the radical SAM superfamily. Lipoyl synthase family. [4Fe-4S] cluster is required as a cofactor.

It is found in the cytoplasm. The catalysed reaction is [[Fe-S] cluster scaffold protein carrying a second [4Fe-4S](2+) cluster] + N(6)-octanoyl-L-lysyl-[protein] + 2 oxidized [2Fe-2S]-[ferredoxin] + 2 S-adenosyl-L-methionine + 4 H(+) = [[Fe-S] cluster scaffold protein] + N(6)-[(R)-dihydrolipoyl]-L-lysyl-[protein] + 4 Fe(3+) + 2 hydrogen sulfide + 2 5'-deoxyadenosine + 2 L-methionine + 2 reduced [2Fe-2S]-[ferredoxin]. It participates in protein modification; protein lipoylation via endogenous pathway; protein N(6)-(lipoyl)lysine from octanoyl-[acyl-carrier-protein]. Catalyzes the radical-mediated insertion of two sulfur atoms into the C-6 and C-8 positions of the octanoyl moiety bound to the lipoyl domains of lipoate-dependent enzymes, thereby converting the octanoylated domains into lipoylated derivatives. The protein is Lipoyl synthase of Staphylococcus carnosus (strain TM300).